Here is a 170-residue protein sequence, read N- to C-terminus: MNLEKFIKDVKDFPKQGINFKDISPLLANGQALNYTIKKMAELAKDADIIVGPDARGFLFGTPTAAFLSKPFIMVRKKGKLPGEVIKHEYDLEYGKDILEIQKGVIKPGDKAIIIDDVLATGGTTKAIIDLLESQGAKVIKIILLLELTNLNGRSKFGSLQVESLVKVSV.

It belongs to the purine/pyrimidine phosphoribosyltransferase family. In terms of assembly, homodimer.

The protein localises to the cytoplasm. The enzyme catalyses AMP + diphosphate = 5-phospho-alpha-D-ribose 1-diphosphate + adenine. The protein operates within purine metabolism; AMP biosynthesis via salvage pathway; AMP from adenine: step 1/1. Its function is as follows. Catalyzes a salvage reaction resulting in the formation of AMP, that is energically less costly than de novo synthesis. In Mycoplasmopsis pulmonis (strain UAB CTIP) (Mycoplasma pulmonis), this protein is Adenine phosphoribosyltransferase.